The primary structure comprises 31 residues: Photosystem II reaction center protein M (31 aa).

The chain crosses the membrane as a helical span at residues 5–25 (ILAFIATALLILVPTAFLLII).

It belongs to the PsbM family. PSII is composed of 1 copy each of membrane proteins PsbA, PsbB, PsbC, PsbD, PsbE, PsbF, PsbH, PsbI, PsbJ, PsbK, PsbL, PsbM, PsbT, PsbX, PsbY, PsbZ, Psb30/Ycf12, at least 3 peripheral proteins of the oxygen-evolving complex and a large number of cofactors. It forms dimeric complexes.

It is found in the plastid membrane. Its function is as follows. One of the components of the core complex of photosystem II (PSII). PSII is a light-driven water:plastoquinone oxidoreductase that uses light energy to abstract electrons from H(2)O, generating O(2) and a proton gradient subsequently used for ATP formation. It consists of a core antenna complex that captures photons, and an electron transfer chain that converts photonic excitation into a charge separation. This subunit is found at the monomer-monomer interface. This Cuscuta reflexa (Southern Asian dodder) protein is Photosystem II reaction center protein M.